A 380-amino-acid polypeptide reads, in one-letter code: Actin-like protein (380 aa).

The protein belongs to the actin family. ARP1 subfamily.

The protein localises to the cytoplasm. It localises to the cytoskeleton. In terms of biological role, involved in nuclear migration. May function as a component of the dynactin complex which activates force generation by cytoplasmic dynein. In Neurospora crassa (strain ATCC 24698 / 74-OR23-1A / CBS 708.71 / DSM 1257 / FGSC 987), this protein is Actin-like protein (ro-4).